Here is a 311-residue protein sequence, read N- to C-terminus: Thioredoxin reductase (311 aa).

Residues 31-39 (FEKGMPGGQ) and 32-39 (EKGMPGGQ) each bind FAD. Cysteines 133 and 136 form a disulfide. 281 to 290 (DIRIFAPKQV) lines the FAD pocket.

This sequence belongs to the class-II pyridine nucleotide-disulfide oxidoreductase family. Homodimer. It depends on FAD as a cofactor.

The protein localises to the cytoplasm. The catalysed reaction is [thioredoxin]-dithiol + NADP(+) = [thioredoxin]-disulfide + NADPH + H(+). This Helicobacter pylori (strain J99 / ATCC 700824) (Campylobacter pylori J99) protein is Thioredoxin reductase (trxB).